Consider the following 153-residue polypeptide: Insulin-like growth factor 1 (153 aa).

A b region spans residues 49 to 77; sequence GPETLCGAELVDALQFVCGDRGFYFNKPT. Cystine bridges form between C54-C96, C66-C109, and C95-C100. The interval 78-89 is c; that stretch reads GYGSSSRRAPQT. Positions 90–110 are a; it reads GIVDECCFRSCDLRRLEMYCA. The interval 111–118 is d; it reads PLKPAKSA. The propeptide at 119–153 is e peptide; sequence RSVRAQRHTDMPKAQKEVHLKNASRGSAGNKNYRM. The segment at 120–153 is disordered; that stretch reads SVRAQRHTDMPKAQKEVHLKNASRGSAGNKNYRM. Over residues 125 to 138 the composition is skewed to basic and acidic residues; the sequence is RHTDMPKAQKEVHL. The segment covering 142–153 has biased composition (polar residues); it reads SRGSAGNKNYRM.

Belongs to the insulin family. In terms of assembly, forms a ternary complex with IGFR1 and ITGAV:ITGB3. Forms a ternary complex with IGFR1 and ITGA6:ITGB4. Forms a ternary complex with IGFBP3 and ALS.

Its subcellular location is the secreted. The insulin-like growth factors, isolated from plasma, are structurally and functionally related to insulin but have a much higher growth-promoting activity. May be a physiological regulator of [1-14C]-2-deoxy-D-glucose (2DG) transport and glycogen synthesis in osteoblasts. Stimulates glucose transport in bone-derived osteoblastic (PyMS) cells and is effective at much lower concentrations than insulin, not only regarding glycogen and DNA synthesis but also with regard to enhancing glucose uptake. May play a role in synapse maturation. Ca(2+)-dependent exocytosis of IGF1 is required for sensory perception of smell in the olfactory bulb. Acts as a ligand for IGF1R. Binds to the alpha subunit of IGF1R, leading to the activation of the intrinsic tyrosine kinase activity which autophosphorylates tyrosine residues in the beta subunit thus initiating a cascade of down-stream signaling events leading to activation of the PI3K-AKT/PKB and the Ras-MAPK pathways. Binds to integrins ITGAV:ITGB3 and ITGA6:ITGB4. Its binding to integrins and subsequent ternary complex formation with integrins and IGFR1 are essential for IGF1 signaling. Induces the phosphorylation and activation of IGFR1, MAPK3/ERK1, MAPK1/ERK2 and AKT1. As part of the MAPK/ERK signaling pathway, acts as a negative regulator of apoptosis in cardiomyocytes via promotion of STUB1/CHIP-mediated ubiquitination and degradation of ICER-type isoforms of CREM. The chain is Insulin-like growth factor 1 from Ailuropoda melanoleuca (Giant panda).